A 132-amino-acid polypeptide reads, in one-letter code: Small ribosomal subunit protein uS8 (132 aa).

The protein belongs to the universal ribosomal protein uS8 family. As to quaternary structure, part of the 30S ribosomal subunit. Contacts proteins S5 and S12.

In terms of biological role, one of the primary rRNA binding proteins, it binds directly to 16S rRNA central domain where it helps coordinate assembly of the platform of the 30S subunit. The polypeptide is Small ribosomal subunit protein uS8 (Xylella fastidiosa (strain M23)).